The sequence spans 153 residues: MGKISSLPTQLFKCCFCDFLKVKMHTVSSSHLFYLALCLLTFPSPATAGPETLCGAELVDALQFVCGDRGFYFNKPTGYGSSSRRAPQTGIVDECCFRSCDLRRLEMYCAPLKPAKSARSVRAQRHTDMPKAQKEVHLKNASRGSAGNKNYRM.

A b region spans residues 49-77 (GPETLCGAELVDALQFVCGDRGFYFNKPT). Cystine bridges form between cysteine 54–cysteine 96, cysteine 66–cysteine 109, and cysteine 95–cysteine 100. Positions 78 to 89 (GYGSSSRRAPQT) are c. The segment at 90 to 110 (GIVDECCFRSCDLRRLEMYCA) is a. Residues 111–118 (PLKPAKSA) are d. A propeptide spans 119 to 153 (RSVRAQRHTDMPKAQKEVHLKNASRGSAGNKNYRM) (e peptide). A disordered region spans residues 120-153 (SVRAQRHTDMPKAQKEVHLKNASRGSAGNKNYRM). Residues 125-138 (RHTDMPKAQKEVHL) show a composition bias toward basic and acidic residues. Over residues 142–153 (SRGSAGNKNYRM) the composition is skewed to polar residues.

Belongs to the insulin family. In terms of assembly, forms a ternary complex with IGFR1 and ITGAV:ITGB3. Forms a ternary complex with IGFR1 and ITGA6:ITGB4. Forms a ternary complex with IGFBP3 and ALS.

Its subcellular location is the secreted. Functionally, the insulin-like growth factors, isolated from plasma, are structurally and functionally related to insulin but have a much higher growth-promoting activity. May be a physiological regulator of [1-14C]-2-deoxy-D-glucose (2DG) transport and glycogen synthesis in osteoblasts. Stimulates glucose transport in bone-derived osteoblastic (PyMS) cells and is effective at much lower concentrations than insulin, not only regarding glycogen and DNA synthesis but also with regard to enhancing glucose uptake. May play a role in synapse maturation. Ca(2+)-dependent exocytosis of IGF1 is required for sensory perception of smell in the olfactory bulb. Acts as a ligand for IGF1R. Binds to the alpha subunit of IGF1R, leading to the activation of the intrinsic tyrosine kinase activity which autophosphorylates tyrosine residues in the beta subunit thus initiating a cascade of down-stream signaling events leading to activation of the PI3K-AKT/PKB and the Ras-MAPK pathways. Binds to integrins ITGAV:ITGB3 and ITGA6:ITGB4. Its binding to integrins and subsequent ternary complex formation with integrins and IGFR1 are essential for IGF1 signaling. Induces the phosphorylation and activation of IGFR1, MAPK3/ERK1, MAPK1/ERK2 and AKT1. As part of the MAPK/ERK signaling pathway, acts as a negative regulator of apoptosis in cardiomyocytes via promotion of STUB1/CHIP-mediated ubiquitination and degradation of ICER-type isoforms of CREM. In Canis lupus familiaris (Dog), this protein is Insulin-like growth factor 1.